The chain runs to 204 residues: Inactive ribonuclease-like protein 9 (204 aa).

The signal sequence occupies residues 1-26 (MMRTLITTHPLLLLLLLQQLLQPVQF). 3 disulfides stabilise this stretch: Cys-97-Cys-152, Cys-115-Cys-167, and Cys-122-Cys-129. N-linked (GlcNAc...) asparagine glycosylation is found at Asn-130 and Asn-142.

Belongs to the pancreatic ribonuclease family.

It localises to the secreted. Does not exhibit any ribonuclease activity. The protein is Inactive ribonuclease-like protein 9 (RNASE9) of Papio anubis (Olive baboon).